The primary structure comprises 3564 residues: Sushi, von Willebrand factor type A, EGF and pentraxin domain-containing protein 1 (3564 aa).

The first 17 residues, 1-17, serve as a signal peptide directing secretion; it reads MWTRLAFCCWALALVSG. In terms of domain architecture, VWFA spans 84–265; it reads ELVFLVDESS…LARRALHEDL (182 aa). Asn187 is a glycosylation site (N-linked (GlcNAc...) asparagine). Sushi domains are found at residues 377–436, 437–496, and 497–561; these read VHCP…FCRV, RTCP…RCVE, and RHCA…VCKD. 6 disulfide bridges follow: Cys379/Cys421, Cys407/Cys434, Cys439/Cys481, Cys467/Cys494, Cys499/Cys544, and Cys530/Cys559. HYR domains follow at residues 560-644 and 645-724; these read KDVE…KVID and VEPP…VIKG. The 65-residue stretch at 725–789 folds into the Sushi 4 domain; that stretch reads SPCEVPFTPV…YSTEWPDCAI (65 aa). 20 cysteine pairs are disulfide-bonded: Cys727–Cys769, Cys753–Cys787, Cys1192–Cys1203, Cys1197–Cys1212, Cys1214–Cys1223, Cys1230–Cys1241, Cys1235–Cys1250, Cys1252–Cys1261, Cys1268–Cys1279, Cys1273–Cys1288, Cys1290–Cys1299, Cys1306–Cys1317, Cys1311–Cys1326, Cys1328–Cys1337, Cys1344–Cys1355, Cys1349–Cys1364, Cys1366–Cys1375, Cys1382–Cys1393, Cys1387–Cys1402, and Cys1404–Cys1413. In terms of domain architecture, EGF-like 1 spans 1188–1224; it reads VFHECFLNPCHNSGTCQQLGRGYVCLCPPGYTGLKCE. Residues 1226–1262 enclose the EGF-like 2; calcium-binding domain; that stretch reads DIDECSSLPCLNGGICRDKVGGFTCECSSGYTGQICE. Positions 1264-1300 constitute an EGF-like 3; calcium-binding domain; it reads NINECSSSPCLNKGTCTDGLASYRCTCVSGYVGVHCE. The EGF-like 4; calcium-binding domain occupies 1302-1338; sequence DVNECQSSPCLNNAVCKDQVGGFSCKCPPGFLGTRCE. An EGF-like 5; calcium-binding domain is found at 1340–1376; the sequence is NVDECLSQPCQNGATCKDGANSFRCQCPAGFTGPHCE. An EGF-like 6; calcium-binding domain is found at 1378–1414; it reads NINECQSNPCRNQATCVDELNSYSCKCRPGFSGRRCE. Positions 1419 to 1623 constitute a Pentraxin (PTX) domain; sequence SGFNLDFEVS…VKVDSSSIFC (205 aa). 2 Sushi domains span residues 1624 to 1682 and 1683 to 1740; these read SDCP…HCER and IRCG…SCLD. Disulfide bonds link Cys1626–Cys1667, Cys1653–Cys1680, Cys1685–Cys1725, Cys1711–Cys1738, Cys1744–Cys1756, Cys1750–Cys1765, Cys1767–Cys1778, Cys1784–Cys1824, Cys1810–Cys1837, Cys1842–Cys1882, Cys1868–Cys1895, Cys1900–Cys1940, Cys1926–Cys1953, Cys1958–Cys1998, Cys1984–Cys2011, Cys2016–Cys2056, Cys2042–Cys2073, Cys2078–Cys2121, Cys2107–Cys2136, Cys2141–Cys2181, Cys2167–Cys2194, Cys2199–Cys2240, Cys2226–Cys2254, Cys2259–Cys2299, Cys2285–Cys2313, Cys2318–Cys2358, Cys2344–Cys2371, Cys2376–Cys2417, Cys2403–Cys2430, Cys2435–Cys2475, Cys2461–Cys2488, Cys2493–Cys2533, Cys2519–Cys2546, Cys2551–Cys2591, and Cys2577–Cys2603. The 40-residue stretch at 1740 to 1779 folds into the EGF-like 7; calcium-binding domain; sequence DVDECAVGSDCSEHASCLNTNGSYICSCKPPYTGDGKNCA. Asn1760 is a glycosylation site (N-linked (GlcNAc...) asparagine). Sushi domains follow at residues 1776 to 1839, 1840 to 1897, 1898 to 1955, 1956 to 2013, 2014 to 2075, 2076 to 2138, 2139 to 2196, 2197 to 2256, 2257 to 2315, 2316 to 2373, 2374 to 2432, 2433 to 2490, 2491 to 2548, and 2549 to 2605; these read KNCA…SCEA, ISCG…VCEL, VKCS…SCQL, VSCG…QCLA, VSCD…RCIA, HFCE…QCIP, VRCG…TCHP, VSCN…SCTP, LNCG…KCVP, TKCA…VCKL, VLCQ…ECVP, VECP…MCRP, IECP…SCNA, and IHCS…TCVP. Positions 2634 to 2641 are important for the interaction with integrin ITGA9:ITGB1; sequence DMMEVPYL. Sushi domains lie at 2659–2708, 2709–2766, 2767–2824, 2825–2882, 2883–2940, 2941–2998, 2999–3054, 3055–3112, 3113–3171, 3172–3231, 3232–3289, 3290–3347, 3348–3406, and 3407–3463; these read EESL…SCIS, IECD…RCEV, ISCS…VCLP, VDCG…SCVP, VRCP…ICKP, ATCG…SCLP, CTCS…LCEH, ADCG…TCEP, VSCG…NCSP, KTCP…SCIP, VVCG…VCRE, SRCE…LCKP, NPCP…RCEK, and ISCG…ICRA. 33 cysteine pairs are disulfide-bonded: Cys2679–Cys2706, Cys2711–Cys2751, Cys2737–Cys2764, Cys2769–Cys2809, Cys2795–Cys2822, Cys2827–Cys2867, Cys2853–Cys2880, Cys2885–Cys2925, Cys2911–Cys2938, Cys2943–Cys2983, Cys2969–Cys2996, Cys3001–Cys3040, Cys3026–Cys3052, Cys3057–Cys3097, Cys3083–Cys3110, Cys3115–Cys3156, Cys3141–Cys3169, Cys3174–Cys3214, Cys3200–Cys3229, Cys3234–Cys3274, Cys3260–Cys3287, Cys3292–Cys3332, Cys3318–Cys3345, Cys3350–Cys3391, Cys3377–Cys3404, Cys3409–Cys3449, Cys3435–Cys3461, Cys3497–Cys3507, Cys3501–Cys3513, Cys3515–Cys3524, Cys3529–Cys3539, Cys3533–Cys3545, and Cys3547–Cys3556. EGF-like domains are found at residues 3493–3525 and 3526–3557; these read EEPICILPCLNGGRCVAPYRCDCPAGWTGSRCH and TATCQSPCLNGGKCVRPNRCHCLSSWTGHDCS.

Interacts (via Sushi domain 21) with ITGA9:ITGB1; thereby inhibits Ca(2+) intracellular signaling and as a result represses vasocontraction. Interacts (via Sushi domain 21) with ITGA4:ITGB1; thereby inhibits Ca(2+) intracellular signaling and as a result represses vasocontraction. Interacts with ANGPT1 and ANGPT2. Interacts with PEAR1 (via extracellular domain). Interacts with HSPG2, TLN1, FN1, COPA, CCT2, IQGAP1, LAMC1 and NID1. Interacts (via C-terminus) with TIE1.

The protein resides in the secreted. The protein localises to the nucleus. Its subcellular location is the cytoplasm. It localises to the membrane. Required for morphological development, cell alignment and migration of lymphatic endothelial cells during embryonic development, potentially via modulation of ANGPT2-TIE1 signaling and subsequent activation of FOXC2 transcription. Required for embryonic lymphatic vascular development, via mediating the correct formation of the first lymphovenous contact site and tight association of the lymphatic endothelium with the venous endothelium. Represses PRKCA-mediated L-type voltage-gated channel Ca(2+) influx and ROCK-mediated calcium sensitivity in vascular smooth muscle cells, via its interaction with integrins, thereby inhibiting vasocontraction. Promotes platelet activation, via its interaction with PEAR1 and subsequent activation of AKT/mTOR signaling. Plays a role in epidermal development and keratinocyte differentiation, independent of cell-cell adhesion. May play a role in initial cell attachment of stromal osteogenic cells. May promote myoblast cell adhesion when in the presence of integrin ITGA9:ITGB1. The sequence is that of Sushi, von Willebrand factor type A, EGF and pentraxin domain-containing protein 1 (Svep1) from Rattus norvegicus (Rat).